We begin with the raw amino-acid sequence, 71 residues long: ATP synthase F(0) complex subunit e, mitochondrial (71 aa).

Residue Lys-34 is modified to N6-acetyllysine. Residue Ser-68 is modified to Phosphoserine.

It belongs to the ATPase e subunit family. In terms of assembly, component of the ATP synthase complex composed at least of ATP5F1A/subunit alpha, ATP5F1B/subunit beta, ATP5MC1/subunit c (homooctomer), MT-ATP6/subunit a, MT-ATP8/subunit 8, ATP5ME/subunit e, ATP5MF/subunit f, ATP5MG/subunit g, ATP5MK/subunit k, ATP5MJ/subunit j, ATP5F1C/subunit gamma, ATP5F1D/subunit delta, ATP5F1E/subunit epsilon, ATP5PF/subunit F6, ATP5PB/subunit b, ATP5PD/subunit d, ATP5PO/subunit OSCP. ATP synthase complex consists of a soluble F(1) head domain (subunits alpha(3) and beta(3)) - the catalytic core - and a membrane F(0) domain - the membrane proton channel (subunits c, a, 8, e, f, g, k and j). These two domains are linked by a central stalk (subunits gamma, delta, and epsilon) rotating inside the F1 region and a stationary peripheral stalk (subunits F6, b, d, and OSCP).

The protein localises to the mitochondrion. The protein resides in the mitochondrion inner membrane. Subunit e, of the mitochondrial membrane ATP synthase complex (F(1)F(0) ATP synthase or Complex V) that produces ATP from ADP in the presence of a proton gradient across the membrane which is generated by electron transport complexes of the respiratory chain. ATP synthase complex consist of a soluble F(1) head domain - the catalytic core - and a membrane F(1) domain - the membrane proton channel. These two domains are linked by a central stalk rotating inside the F(1) region and a stationary peripheral stalk. During catalysis, ATP synthesis in the catalytic domain of F(1) is coupled via a rotary mechanism of the central stalk subunits to proton translocation. In vivo, can only synthesize ATP although its ATP hydrolase activity can be activated artificially in vitro. Part of the complex F(0) domain. This chain is ATP synthase F(0) complex subunit e, mitochondrial, found in Pongo abelii (Sumatran orangutan).